Here is a 227-residue protein sequence, read N- to C-terminus: Basic leucine zipper 24 (227 aa).

Residues glutamate 44–aspartate 68 form a disordered region. Residues aspartate 94 to methionine 160 enclose the bZIP domain. Residues lysine 98 to arginine 118 are basic motif. The leucine-zipper stretch occupies residues leucine 122–leucine 129.

In terms of assembly, homodimer. As to expression, expressed in young leaves and cauline leaves.

It is found in the nucleus. Its subcellular location is the cytoplasm. Its function is as follows. Transcription factor involved in the regulation of salt stress response. Functions as a negative transcriptional regulator of salt stress acclimation response by regulating cation homeostasis. Negatively regulates the expression of genes contributing to ion and osmotic homeostasis during salt stress, such as the Na(+) transporter HKT1, the Na(+)/H(+) antiporter SOS1, the aquaporin PIP2-1 and the glutamine synthetase GLN1-3. In addition, targets genes with functions in plant growth and development, such as argonaute 4 (AGO4) and cyclophilin 19 (CYP19). The chain is Basic leucine zipper 24 from Arabidopsis thaliana (Mouse-ear cress).